A 725-amino-acid polypeptide reads, in one-letter code: Phosphoribosylformylglycinamidine synthase subunit PurL (725 aa).

His42 is an active-site residue. The ATP site is built by Tyr45 and Lys84. Glu86 contacts Mg(2+). Substrate contacts are provided by residues 87-90 and Arg109; that span reads SHNH. His88 acts as the Proton acceptor in catalysis. Asp110 lines the Mg(2+) pocket. Gln237 serves as a coordination point for substrate. Asp265 provides a ligand contact to Mg(2+). 309–311 contributes to the substrate binding site; it reads ESQ. ATP contacts are provided by Asp491 and Gly528. Residue Asn529 participates in Mg(2+) binding. Ser531 provides a ligand contact to substrate.

The protein belongs to the FGAMS family. As to quaternary structure, monomer. Part of the FGAM synthase complex composed of 1 PurL, 1 PurQ and 2 PurS subunits.

The protein resides in the cytoplasm. It carries out the reaction N(2)-formyl-N(1)-(5-phospho-beta-D-ribosyl)glycinamide + L-glutamine + ATP + H2O = 2-formamido-N(1)-(5-O-phospho-beta-D-ribosyl)acetamidine + L-glutamate + ADP + phosphate + H(+). It participates in purine metabolism; IMP biosynthesis via de novo pathway; 5-amino-1-(5-phospho-D-ribosyl)imidazole from N(2)-formyl-N(1)-(5-phospho-D-ribosyl)glycinamide: step 1/2. Part of the phosphoribosylformylglycinamidine synthase complex involved in the purines biosynthetic pathway. Catalyzes the ATP-dependent conversion of formylglycinamide ribonucleotide (FGAR) and glutamine to yield formylglycinamidine ribonucleotide (FGAM) and glutamate. The FGAM synthase complex is composed of three subunits. PurQ produces an ammonia molecule by converting glutamine to glutamate. PurL transfers the ammonia molecule to FGAR to form FGAM in an ATP-dependent manner. PurS interacts with PurQ and PurL and is thought to assist in the transfer of the ammonia molecule from PurQ to PurL. The protein is Phosphoribosylformylglycinamidine synthase subunit PurL of Campylobacter lari (strain RM2100 / D67 / ATCC BAA-1060).